The primary structure comprises 264 residues: Thymidylate synthase (264 aa).

Arg21 is a binding site for dUMP. His51 lines the (6R)-5,10-methylene-5,6,7,8-tetrahydrofolate pocket. DUMP is bound at residue 126 to 127 (RR). The active-site Nucleophile is Cys146. DUMP-binding positions include 166-169 (RSAD), Asn177, and 207-209 (HIY). Residue Asp169 coordinates (6R)-5,10-methylene-5,6,7,8-tetrahydrofolate. Ala263 serves as a coordination point for (6R)-5,10-methylene-5,6,7,8-tetrahydrofolate.

Belongs to the thymidylate synthase family. Bacterial-type ThyA subfamily. As to quaternary structure, homodimer.

The protein localises to the cytoplasm. The catalysed reaction is dUMP + (6R)-5,10-methylene-5,6,7,8-tetrahydrofolate = 7,8-dihydrofolate + dTMP. It functions in the pathway pyrimidine metabolism; dTTP biosynthesis. Its function is as follows. Catalyzes the reductive methylation of 2'-deoxyuridine-5'-monophosphate (dUMP) to 2'-deoxythymidine-5'-monophosphate (dTMP) while utilizing 5,10-methylenetetrahydrofolate (mTHF) as the methyl donor and reductant in the reaction, yielding dihydrofolate (DHF) as a by-product. This enzymatic reaction provides an intracellular de novo source of dTMP, an essential precursor for DNA biosynthesis. The sequence is that of Thymidylate synthase from Porphyromonas gingivalis (strain ATCC BAA-308 / W83).